Consider the following 1998-residue polypeptide: Histone acetyltransferase KAT6A (1998 aa).

One can recognise an SAMD1-like winged helix (WH) domain in the interval 1 to 77 (MVKLANPLYT…LNSYKDPDNP (77 aa)). The tract at residues 1 to 144 (MVKLANPLYT…CGGTAASGFH (144 aa)) is required for activation of RUNX1-1. The tract at residues 52–166 (ELSVKDGTIL…HGRLLKDGPL (115 aa)) is required for nuclear localization. The disordered stretch occupies residues 72-93 (KDPDNPGRIALPKPRNHGKLDN). One can recognise an H15 domain in the interval 95 to 171 (QSVDWNKLLK…KDGPLYRLNT (77 aa)). Residues 144–662 (HQQLRLAIKR…RKGYGRFLID (519 aa)) are interaction with PML. Lys-172 is subject to N6-acetyllysine. 2 consecutive PHD-type zinc fingers follow at residues 199 to 258 (DKPV…LRWQ) and 255 to 306 (LRWQ…GMWI). Residues 312–662 (PRKKGRKLLQ…RKGYGRFLID (351 aa)) form an interaction with RUNX1-1 region. A disordered region spans residues 336 to 377 (GRPKNRLKKQSTVSKGPFSKVRTGPGRGRKRKITVSSQSASS). Residues Lys-350 and Lys-355 each carry the N6-acetyllysine modification. Thr-369 bears the Phosphothreonine; by PKB/AKT1 mark. Ser-419 is subject to Phosphoserine. The tract at residues 440-464 (KGNRKSSTSHWPTDNQDGWESKQES) is disordered. A compositionally biased stretch (polar residues) spans 444 to 457 (KSSTSHWPTDNQDG). Ser-471 is subject to Phosphoserine. A catalytic region spans residues 486-776 (IQEQALQKVG…VDPECLRWTP (291 aa)). Residues 502 to 776 (PQVRCPSVIE…VDPECLRWTP (275 aa)) form the MYST-type HAT domain. Residues 505-808 (RCPSVIEFGK…EPQGQERELE (304 aa)) are mediates interaction with BRPF1, required for histone H3 acetyltransferase activity. The segment at 535-560 (LYLCEFCLKYMKSRTILQQHMKKCGW) adopts a C2HC MYST-type zinc-finger fold. At Lys-602 the chain carries N6-acetyllysine; by autocatalysis. Acetyl-CoA is bound by residues 643 to 647 (SCIMI) and 652 to 658 (QRKGYGR). Glu-678 functions as the Proton donor/acceptor in the catalytic mechanism. Ser-682 contacts acetyl-CoA. Residues 783–947 (VVSEEEDEEA…RFSESADLWR (165 aa)) form a disordered region. Residue Ser-785 is modified to Phosphoserine. Acidic residues predominate over residues 785-797 (SEEEDEEADDGEK). The segment covering 798 to 840 (EEPQGQERELETRERVGKSVSRENKDQDSSSLIESEKKPEVKE) has biased composition (basic and acidic residues). Lys-815 carries the N6-acetyllysine modification. Lys-835 participates in a covalent cross-link: Glycyl lysine isopeptide (Lys-Gly) (interchain with G-Cter in SUMO2). Positions 865–874 (RRGRCGRKNR) are enriched in basic residues. A compositionally biased stretch (basic and acidic residues) spans 875–886 (KTQERFGDKDSK). Residue Tyr-900 is modified to Phosphotyrosine. The span at 903–916 (CEEKSAASRERYTE) shows a compositional bias: basic and acidic residues. Ser-940 and Ser-953 each carry phosphoserine. Residues 982 to 1079 (GFSESSEEEE…EEEEDENELF (98 aa)) are disordered. Lys-1006 bears the N6-acetyllysine mark. The span at 1008–1029 (TLKRKKPILHRRRRVRKRKHHN) shows a compositional bias: basic residues. A compositionally biased stretch (low complexity) spans 1030 to 1041 (SSVVTETISETT). 2 stretches are compositionally biased toward acidic residues: residues 1042–1052 (EVLDEPFEDSD) and 1064–1077 (FEIEEEEEEEDENE). A phosphoserine mark is found at Ser-1088, Ser-1089, and Ser-1114. Disordered stretches follow at residues 1096–1175 (QASS…PGFK), 1195–1436 (PIKP…EGAY), 1450–1567 (QSYT…STMG), and 1630–1702 (TCVV…CSMN). Positions 1106-1119 (DEEEEEEESDDADD) are enriched in acidic residues. A compositionally biased stretch (polar residues) spans 1135-1146 (NSASLEPDTSTP). Over residues 1147 to 1173 (MKKKKGWPKGKSRKPIHWKKRPGRKPG) the composition is skewed to basic residues. Positions 1203–1228 (RTQESEELVEVKEGLVEERKEEMHTE) are enriched in basic and acidic residues. 2 stretches are compositionally biased toward acidic residues: residues 1229-1240 (ADEEAEEEEDAA) and 1281-1298 (EEPQELEEQEQEEEDEVT). Composition is skewed to basic and acidic residues over residues 1316 to 1333 (HLDSLKTKEPEGQPARED), 1351 to 1360 (DSRENAKDKD), and 1392 to 1413 (DSNTKEELIELKEEEEIPHSEL). Residues 1472–1496 (HNSPISSIPSHPSQSVRSVSSPSMP) show a composition bias toward low complexity. The segment covering 1501–1522 (GYTQISPEQGSLSAPSMQNMET) has biased composition (polar residues). The segment at 1510-1635 (GSLSAPSMQN…KSPQTCVVER (126 aa)) is interaction with RUNX1-2. The segment at 1510–1735 (GSLSAPSMQN…YERIPGDFGA (226 aa)) is interaction with PML. Low complexity predominate over residues 1527-1541 (DVPSVSDHSQQVVDS). Positions 1549–1567 (IESTTENYENPSSYDSTMG) are enriched in polar residues. 2 stretches are compositionally biased toward pro residues: residues 1639 to 1658 (NQQPPPPPPPPPPPQQPQPQ) and 1665 to 1693 (PQPPPPQPQQQPPPPPQQQPQPPPPPQQQ). The segment at 1907–1942 (SMNMNTLNAMNSYRMTQPMMNSSYHSNPAYMNQTAQ) is required for activation of RUNX1-2.

This sequence belongs to the MYST (SAS/MOZ) family. In terms of assembly, component of the MOZ/MORF complex composed at least of ING5, KAT6A, KAT6B, MEAF6 and one of BRPF1, BRD1/BRPF2 and BRPF3. Interacts with RUNX1; phosphorylation of RUNX1 enhances the interaction. Interacts with RUNX2. Interacts with p53/TP53. Interacts with PML and this interaction positively regulates its acetylation activity towards p53/TP53. Autoacetylated. Autoacetylation at Lys-602 is required for proper function. Post-translationally, phosphorylation at Thr-369 by PKB/AKT1 inhibits its interaction with PML and negatively regulates its acetylation activity towards p53/TP53.

Its subcellular location is the nucleus. The protein resides in the nucleolus. It localises to the nucleoplasm. The protein localises to the PML body. The enzyme catalyses L-lysyl-[protein] + acetyl-CoA = N(6)-acetyl-L-lysyl-[protein] + CoA + H(+). Its function is as follows. Histone acetyltransferase that acetylates lysine residues in histone H3 and histone H4 (in vitro). Component of the MOZ/MORF complex which has a histone H3 acetyltransferase activity. May act as a transcriptional coactivator for RUNX1 and RUNX2. Acetylates p53/TP53 at 'Lys-120' and 'Lys-382' and controls its transcriptional activity via association with PML. The polypeptide is Histone acetyltransferase KAT6A (Kat6a) (Rattus norvegicus (Rat)).